The primary structure comprises 298 residues: Uricase (298 aa).

Catalysis depends on charge relay system residues Lys18 and Thr63. Positions 63, 64, 165, 182, 229, 230, and 256 each coordinate urate. The active-site Charge relay system is the His258. The short motif at Ala296 to Met298 is the Microbody targeting signal element.

It belongs to the uricase family. As to quaternary structure, homotetramer; dimer of dimers.

The protein localises to the peroxisome. The enzyme catalyses urate + O2 + H2O = 5-hydroxyisourate + H2O2. The protein operates within purine metabolism; urate degradation; (S)-allantoin from urate: step 1/3. Competitively inhibited by xanthine. Functionally, catalyzes the oxidation of uric acid to 5-hydroxyisourate, which is further processed to form (S)-allantoin. The protein is Uricase of Danio rerio (Zebrafish).